The following is a 475-amino-acid chain: ATP synthase subunit beta (475 aa).

154-161 serves as a coordination point for ATP; that stretch reads GGAGVGKT.

The protein belongs to the ATPase alpha/beta chains family. In terms of assembly, F-type ATPases have 2 components, CF(1) - the catalytic core - and CF(0) - the membrane proton channel. CF(1) has five subunits: alpha(3), beta(3), gamma(1), delta(1), epsilon(1). CF(0) has three main subunits: a(1), b(2) and c(9-12). The alpha and beta chains form an alternating ring which encloses part of the gamma chain. CF(1) is attached to CF(0) by a central stalk formed by the gamma and epsilon chains, while a peripheral stalk is formed by the delta and b chains.

It is found in the cell inner membrane. It carries out the reaction ATP + H2O + 4 H(+)(in) = ADP + phosphate + 5 H(+)(out). Functionally, produces ATP from ADP in the presence of a proton gradient across the membrane. The catalytic sites are hosted primarily by the beta subunits. The protein is ATP synthase subunit beta of Hyphomonas neptunium (strain ATCC 15444).